The following is a 138-amino-acid chain: Putative nickel-responsive regulator (138 aa).

Ni(2+) contacts are provided by H78, H89, H91, and C97.

The protein belongs to the transcriptional regulatory CopG/NikR family. Ni(2+) is required as a cofactor.

Functionally, transcriptional regulator. The protein is Putative nickel-responsive regulator of Pyrococcus abyssi (strain GE5 / Orsay).